Here is a 668-residue protein sequence, read N- to C-terminus: Echinocandin B biosynthetic cluster protein J (668 aa).

Disordered regions lie at residues 1 to 20, 92 to 113, 224 to 322, 330 to 349, and 483 to 506; these read MHFA…DQSL, YTPP…PPTP, PLDH…QSAD, EVAE…SIPT, and NCSS…PPLK. A compositionally biased stretch (polar residues) spans 96–106; that stretch reads SLDSRSSATPP. Positions 264 to 275 are enriched in pro residues; the sequence is NPEPGTPTPPSP. Residues 311–322 are compositionally biased toward polar residues; the sequence is YRSTPSPCQSAD. Low complexity predominate over residues 484-494; sequence CSSSSCSSSAS. Residues 495–505 are compositionally biased toward basic and acidic residues; that stretch reads KKNEEKREPPL.

It participates in antifungal biosynthesis. Part of the gene cluster that mediates the biosynthesis of echinocandin B, a fungal lipidated cyclic hexapeptide that acts as an antifungal agent. Linoleoyl-AMP, produced by the fatty-acyl-AMP ligase ecdI, is transferred to the initiation carrier domain (T0) of ecdA. The linoleoyl-S-phosphopantetheinyl-T0 is sequentially extended with L-ornithine, L-threonine, L-proline, L-homotyrosine, L-threonine, and 4R-methyl-L-proline to form the linear hexapeptide. Thereafter, the terminal condensation (C7) performs macrocyclization of the NRPS product and the cyclic scaffold is released from ecdA. All six of the amino acid residues are hydroxylated, including 4R,5R-dihydroxy-L-ornithine, 4R-hydroxyl-L-proline, 3S,4S-dihydroxy-L-homotyrosine, and 3S-hydroxyl-4S-methyl-L-prolin. In the pathway, all the hydroxylation reactions are proposed to occur following completion of the cyclic peptide, so the unhydroxylated precursor produced by ecdA will undergo six rounds of hydroxylation. Five hydroxylase genes (ecdG, ecdH, ecdK, htyE and htyF) are embedded within the echinocandin B (ecd) and L-homotyrosine (hty) clusters. The polypeptide is Echinocandin B biosynthetic cluster protein J (Aspergillus rugulosus (Emericella rugulosa)).